A 145-amino-acid chain; its full sequence is Large ribosomal subunit protein uL13 (145 aa).

It belongs to the universal ribosomal protein uL13 family. In terms of assembly, part of the 50S ribosomal subunit.

In terms of biological role, this protein is one of the early assembly proteins of the 50S ribosomal subunit, although it is not seen to bind rRNA by itself. It is important during the early stages of 50S assembly. This Geobacillus sp. (strain WCH70) protein is Large ribosomal subunit protein uL13.